A 661-amino-acid polypeptide reads, in one-letter code: Solute carrier organic anion transporter family member 1A4 (661 aa).

Over 1 to 20 (MGKSEKRVATHGVRCFAKIK) the chain is Cytoplasmic. Residues 21–40 (MFLLALTCAYVSKSLSGTYM) traverse the membrane as a helical segment. Residues 41–59 (NSMLTQIERQFGIPTSIVG) are Extracellular-facing. The chain crosses the membrane as a helical span at residues 60-80 (LINGSFEIGNLLLIIFVSYFG). Residues 81 to 86 (TKLHRP) are Cytoplasmic-facing. A helical membrane pass occupies residues 87–111 (IMIGVGCAVMGLGCFLISLPHFLMG). Over 112–154 (QYEYETILPTSNVSSNSFFCVENRSQTLNPTQDPSECVKEMKS) the chain is Extracellular. Asparagine 123 and asparagine 134 each carry an N-linked (GlcNAc...) asparagine glycan. Residues 155–183 (LMWIYVLVGNIIRGIGETPIMPLGISYIE) traverse the membrane as a helical segment. The Cytoplasmic portion of the chain corresponds to 184 to 202 (DFAKSENSPLYIGILETGM). The helical transmembrane segment at 203–223 (TIGPLIGLLLASSCANIYVDI) threads the bilayer. Residues 224 to 241 (ESVNTDDLTITPTDTRWV) are Extracellular-facing. The chain crosses the membrane as a helical span at residues 242–266 (GAWWIGFLVCAGVNILTSFPFFFFP). Over 267–310 (KTLPKEGLQENVDGTENAKEKKHRKKAKEEKRGITKDFFVFMKS) the chain is Cytoplasmic. The chain crosses the membrane as a helical span at residues 311–332 (LSCNPIYMLFILISVLQFNAFI). Residues 333 to 352 (NSFTFMPKYLEQQYGKSTAE) lie on the Extracellular side of the membrane. A helical transmembrane segment spans residues 353-376 (VVFLMGLYMLPPICLGYLIGGLIM). Residues 377-380 (KKFK) lie on the Cytoplasmic side of the membrane. The helical transmembrane segment at 381-404 (VTVKKAAHLAFWLCLSEYLLSFLS) threads the bilayer. Residues 405–512 (YVMTCDNFPV…PDCANKLQYF (108 aa)) are Extracellular-facing. The region spanning 432 to 487 (NKVLADCNTRCNCSTNTWDPVCGDNGLAYMSACLAGCEKSVGTGTNMVFQNCSCIQ) is the Kazal-like domain. 3 disulfide bridges follow: cysteine 438–cysteine 468, cysteine 444–cysteine 464, and cysteine 453–cysteine 485. A glycan (N-linked (GlcNAc...) asparagine) is linked at asparagine 443. Asparagine 482 and asparagine 491 each carry an N-linked (GlcNAc...) asparagine glycan. The helical transmembrane segment at 513 to 535 (LIIAIFGCFIYSLAGIPGYMVLL) threads the bilayer. At 536–544 (RCIKSEEKS) the chain is on the cytoplasmic side. A helical membrane pass occupies residues 545–570 (LGVGLHAFCIRILAGIPAPIYFGALI). Over 571-604 (DRTCLHWGTLKCGEPGACRMYDINSFRRLYLGLP) the chain is Extracellular. A helical membrane pass occupies residues 605-622 (AALRGASFVPAFFILRLT). Over 623–661 (RTFQFPGDIESSKTDHAEMKLTLKESECTEVLRSKVTED) the chain is Cytoplasmic. Residues serine 633 and serine 634 each carry the phosphoserine modification.

The protein belongs to the organo anion transporter (TC 2.A.60) family. Highly expressed in brain, liver, and kidney but not expressed in heart, spleen, lung, skeletal muscle, and testis.

Its subcellular location is the cell membrane. It carries out the reaction estrone 3-sulfate(out) = estrone 3-sulfate(in). It catalyses the reaction taurocholate(out) = taurocholate(in). The enzyme catalyses prostaglandin E2(out) = prostaglandin E2(in). The catalysed reaction is L-thyroxine(out) = L-thyroxine(in). Its function is as follows. Mediates the Na(+)-independent transport of organic anions such as taurocholate, cholate, 17-beta-glucuronosyl estradiol, prostaglandin E2, estrone 3-sulfate, L-thyroxine (T4), the cardiac glycosides ouabain and digoxin and thyroid hormones. May play an especially important role in the brain accumulation and toxicity of digoxin and in the hepatobiliary and renal excretion of cardiac glycosides. Shows a pH-sensitive substrate specificity which may be ascribed to the protonation state of the binding site and leads to a stimulation of substrate transport in an acidic microenvironment. Hydrogencarbonate/HCO3(-) acts as the probable counteranion that exchanges for organic anions. The chain is Solute carrier organic anion transporter family member 1A4 (Slco1a4) from Rattus norvegicus (Rat).